We begin with the raw amino-acid sequence, 380 residues long: Putative T-box protein 40 (380 aa).

The T-box DNA-binding region spans 11–192 (MAEEDRWLTQ…KNATFENRLD (182 aa)). A disordered region spans residues 188 to 215 (ENRLDGGNKRKNTNSREEPSSKRSKNET). Basic and acidic residues predominate over residues 189–215 (NRLDGGNKRKNTNSREEPSSKRSKNET).

The protein localises to the nucleus. The sequence is that of Putative T-box protein 40 (tbx-40) from Caenorhabditis elegans.